The sequence spans 370 residues: Peridinin-chlorophyll a-binding protein 1, chloroplastic (370 aa).

Residues 1-57 (MVRSGKKAVVLAAVAFCATSVVQKSHGFVPSPLRQRAAAAGAAAASAATMFAPAAFA) constitute a chloroplast transit peptide. 2 repeat units span residues 58 to 220 (DEIG…VPSG) and 221 to 370 (DKIG…AAQR).

As to quaternary structure, homotrimer.

It localises to the plastid. The protein resides in the chloroplast. Water-soluble antenna for capture of solar energy in the blue-green range. Peridinin is an asymmetric carotenoid. In Amphidinium carterae (Dinoflagellate), this protein is Peridinin-chlorophyll a-binding protein 1, chloroplastic.